A 380-amino-acid polypeptide reads, in one-letter code: MVKSADLDLMNSIISESDENFSPPPFTVEEAENSINNKSSTASLESPQNGSWHPSLYGLSVPEKTHIQNSLDLYSHGNSGSQKTHNVSFSCEIRKVKSSKLSPISNMEDSEDKKEEDESSSYKNEFKSSSSASVSSNFEKTSGSDDHNSQSPVPLNEGFEYIASSGSEDKNSDEEFAVEMILDSRMKKDGSGFQYYLKWEGYDDPSDNTWNDEEDCAGCLELIDAYWESRGGKPDLSSLIRLTRSRARSSNEASYVEKDESSNSDDSISYKRRRSRNAANRITDYVDSDLSESSMKEKQSKIEKYMKSDKSSKNFKPPFQKKSWEDLVDCVKTVQQLDNGKLIAKIKWKNGYVSTHDNIIIHQKCPLKIIEYYEAHIKFT.

Disordered stretches follow at residues 14–58 and 100–156; these read ISES…SLYG and KLSP…VPLN. A compositionally biased stretch (polar residues) spans 33-52; the sequence is NSINNKSSTASLESPQNGSW. Positions 108–119 are enriched in acidic residues; sequence EDSEDKKEEDES. Over residues 121–140 the composition is skewed to low complexity; the sequence is SYKNEFKSSSSASVSSNFEK. The 63-residue stretch at 176–238 folds into the Chromo domain; sequence FAVEMILDSR…SRGGKPDLSS (63 aa). Residues 250 to 273 form a disordered region; that stretch reads SNEASYVEKDESSNSDDSISYKRR.

It is found in the nucleus. In terms of biological role, component of the kinetochore which plays a role in stabilizing microtubules and so allowing accurate chromosome segregation. The sequence is that of Chromo domain-containing protein 2 (chp2) from Schizosaccharomyces pombe (strain 972 / ATCC 24843) (Fission yeast).